We begin with the raw amino-acid sequence, 319 residues long: tRNA-modifying protein YgfZ (319 aa).

Positions 27 and 189 each coordinate folate.

It belongs to the tRNA-modifying YgfZ family.

Its subcellular location is the cytoplasm. Its function is as follows. Folate-binding protein involved in regulating the level of ATP-DnaA and in the modification of some tRNAs. It is probably a key factor in regulatory networks that act via tRNA modification, such as initiation of chromosomal replication. The chain is tRNA-modifying protein YgfZ from Buchnera aphidicola subsp. Acyrthosiphon pisum (strain APS) (Acyrthosiphon pisum symbiotic bacterium).